Reading from the N-terminus, the 343-residue chain is Tetraacyldisaccharide 4'-kinase (343 aa).

65–72 (HAGGTGKT) contacts ATP.

It belongs to the LpxK family.

The enzyme catalyses a lipid A disaccharide + ATP = a lipid IVA + ADP + H(+). It participates in glycolipid biosynthesis; lipid IV(A) biosynthesis; lipid IV(A) from (3R)-3-hydroxytetradecanoyl-[acyl-carrier-protein] and UDP-N-acetyl-alpha-D-glucosamine: step 6/6. Its function is as follows. Transfers the gamma-phosphate of ATP to the 4'-position of a tetraacyldisaccharide 1-phosphate intermediate (termed DS-1-P) to form tetraacyldisaccharide 1,4'-bis-phosphate (lipid IVA). This is Tetraacyldisaccharide 4'-kinase from Neisseria gonorrhoeae (strain ATCC 700825 / FA 1090).